The chain runs to 1112 residues: Mediator of RNA polymerase II transcription subunit 14 (1112 aa).

3 disordered regions span residues Met1–Ser76, Ser120–Glu141, and Thr1088–Asp1112. Residues Ser20–Asp39 show a composition bias toward polar residues. The segment covering Ile64–Ile73 has biased composition (basic and acidic residues). Residues Thr1088 to Cys1099 are compositionally biased toward polar residues.

The protein belongs to the Mediator complex subunit 14 family. As to quaternary structure, component of the Mediator complex.

Its subcellular location is the nucleus. Component of the Mediator complex, a coactivator involved in the regulated transcription of nearly all RNA polymerase II-dependent genes. Mediator functions as a bridge to convey information from gene-specific regulatory proteins to the basal RNA polymerase II transcription machinery. Mediator is recruited to promoters by direct interactions with regulatory proteins and serves as a scaffold for the assembly of a functional preinitiation complex with RNA polymerase II and the general transcription factors. The chain is Mediator of RNA polymerase II transcription subunit 14 (rgr1) from Aspergillus clavatus (strain ATCC 1007 / CBS 513.65 / DSM 816 / NCTC 3887 / NRRL 1 / QM 1276 / 107).